Consider the following 1476-residue polypeptide: Coiled-coil domain-containing protein 88B (1476 aa).

A coiled-coil region spans residues 253–481 (SHHLALQLAN…RGLLQVLQGQ (229 aa)). Disordered regions lie at residues 427–451 (QRSL…SLQD), 509–706 (VAFD…EGAL), 825–866 (RRQW…ERRE), and 1323–1476 (LMRP…SLSQ). S436 is subject to Phosphoserine. Residues 572-586 (SDWSPQESGSPVETQ) show a composition bias toward polar residues. S596 is modified (phosphoserine). Basic and acidic residues-rich tracts occupy residues 678–690 (EARE…EGTV), 825–834 (RRQWEREGSR), and 842–866 (AEER…ERRE). Residues 720–1303 (LASGVAEQEA…KIMDQYRVLE (584 aa)) adopt a coiled-coil conformation. 2 positions are modified to phosphoserine: S1348 and S1379. The segment covering 1448–1469 (LQEHETDANREGPEVQEPEKRP) has biased composition (basic and acidic residues).

The protein belongs to the CCDC88 family. In terms of assembly, homodimer. Interacts with DOCK8. Interacts (via C-terminus) with intact microtubules. Interacts with dynein-dynactin motor complex. Interacts (via C-terminus) with HSPA5. Expressed in endothelium (at protein level). Expressed in NK cells (at protein level).

Its subcellular location is the membrane. The protein localises to the cytoplasm. The protein resides in the cytoskeleton. It is found in the microtubule organizing center. It localises to the endoplasmic reticulum. Its subcellular location is the golgi apparatus. Acts as a positive regulator of T-cell maturation and inflammatory function. Required for several functions of T-cells, in both the CD4(+) and the CD8(+) compartments and this includes expression of cell surface markers of activation, proliferation, and cytokine production in response to specific or non-specific stimulation. Enhances NK cell cytotoxicity by positively regulating polarization of microtubule-organizing center (MTOC) to cytotoxic synapse, lytic granule transport along microtubules, and dynein-mediated clustering to MTOC. Interacts with HSPA5 and stabilizes the interaction between HSPA5 and ERN1, leading to suppression of ERN1-induced JNK activation and endoplasmic reticulum stress-induced apoptosis. The protein is Coiled-coil domain-containing protein 88B (CCDC88B) of Homo sapiens (Human).